The primary structure comprises 4965 residues: Auxin transport protein BIG (4965 aa).

3 consecutive transmembrane segments (helical) span residues 289-309 (SDIC…IFSP), 646-666 (ACLA…AYEV), and 772-792 (LFLI…YEGL). Positions 1383–1425 (TNQESNSTVDCDASSGEEDEDDGTSDGELVSIDRDEEEDGNSE) are disordered. The segment covering 1397 to 1407 (SGEEDEDDGTS) has biased composition (acidic residues). Residues 1431 to 1502 (KVCTFTSSGS…RGSSCQCLKP (72 aa)) form a UBR-type zinc finger. Residues 2437 to 2456 (DDAPDNHAKASAASNSTTGN) form a disordered region. The span at 2445–2456 (KASAASNSTTGN) shows a compositional bias: low complexity. A ZZ-type zinc finger spans residues 2469 to 2528 (SVQYCCDGCSTVPILRRRWHCNICPDFDLCETCYEILDADRLPAPHSRDHPMSAIPIELD). The Zn(2+) site is built by Cys2474, Cys2477, Cys2489, Cys2492, Cys2498, Cys2501, His2514, and His2518. The tract at residues 2997-3037 (NAQKTESGDIGSSTRTGSQSSDSKKKRKGDDSSEGSSEKSC) is disordered. A compositionally biased stretch (low complexity) spans 3007–3017 (GSSTRTGSQSS). Residues 3024-3037 (KGDDSSEGSSEKSC) show a composition bias toward basic and acidic residues. An MYND-type; degenerate zinc finger spans residues 3319–3359 (CPRCSRSVTDKHGICSNCHENAYQCRQCRNINYENLDSFLC). The segment at 3672–3721 (PKSDSGEKEPGMGKSSLMQAKNDDTVGHSVTNLSTSKTQSELSGKIPDGS) is disordered. Positions 3699–3713 (HSVTNLSTSKTQSEL) are enriched in polar residues. The UBR4 E3 catalytic module stretch occupies residues 4433-4963 (PSIPLILSML…DFVRAIIHGA (531 aa)). The HemiRING-type zinc-finger motif lies at 4562 to 4681 (GLACMVCREG…WDQLNSLGRA (120 aa)). Residues Cys4565, Cys4568, His4615, and Cys4618 each coordinate Zn(2+). A UZI domain is found at 4684–4963 (SRLRLLTYDI…DFVRAIIHGA (280 aa)). A compositionally biased stretch (low complexity) spans 4753-4770 (SSSPSTPESPVRLSALSG). Disordered regions lie at residues 4753–4778 (SSSP…SGSS) and 4822–4846 (STLK…ADSN). Polar residues predominate over residues 4824 to 4845 (LKLSADTSSSAVRSDEGSSADS).

The protein belongs to the UBR4 family.

Its subcellular location is the membrane. In terms of biological role, required for auxin efflux and polar auxin transport (PAT) influencing auxin-mediated developmental responses (e.g. cell elongation, apical dominance, lateral root production, inflorescence architecture, general growth and development). This is Auxin transport protein BIG from Oryza sativa subsp. japonica (Rice).